A 261-amino-acid chain; its full sequence is 4-hydroxy-tetrahydrodipicolinate reductase (261 aa).

Residues Gly-11–Met-16, Gly-96–Thr-98, and Ala-122–Phe-125 contribute to the NAD(+) site. His-152 (proton donor/acceptor) is an active-site residue. (S)-2,3,4,5-tetrahydrodipicolinate is bound at residue His-153. Lys-156 functions as the Proton donor in the catalytic mechanism. Gly-162–Thr-163 provides a ligand contact to (S)-2,3,4,5-tetrahydrodipicolinate.

The protein belongs to the DapB family.

Its subcellular location is the cytoplasm. The catalysed reaction is (S)-2,3,4,5-tetrahydrodipicolinate + NAD(+) + H2O = (2S,4S)-4-hydroxy-2,3,4,5-tetrahydrodipicolinate + NADH + H(+). The enzyme catalyses (S)-2,3,4,5-tetrahydrodipicolinate + NADP(+) + H2O = (2S,4S)-4-hydroxy-2,3,4,5-tetrahydrodipicolinate + NADPH + H(+). It functions in the pathway amino-acid biosynthesis; L-lysine biosynthesis via DAP pathway; (S)-tetrahydrodipicolinate from L-aspartate: step 4/4. Catalyzes the conversion of 4-hydroxy-tetrahydrodipicolinate (HTPA) to tetrahydrodipicolinate. The sequence is that of 4-hydroxy-tetrahydrodipicolinate reductase from Lactobacillus helveticus (strain DPC 4571).